Consider the following 218-residue polypeptide: Ribose-5-phosphate isomerase A (218 aa).

Substrate-binding positions include 28 to 31, 81 to 84, and 94 to 97; these read TGST, DGAD, and KGGG. Catalysis depends on glutamate 103, which acts as the Proton acceptor. Residue lysine 121 participates in substrate binding.

This sequence belongs to the ribose 5-phosphate isomerase family. In terms of assembly, homodimer.

It catalyses the reaction aldehydo-D-ribose 5-phosphate = D-ribulose 5-phosphate. The protein operates within carbohydrate degradation; pentose phosphate pathway; D-ribose 5-phosphate from D-ribulose 5-phosphate (non-oxidative stage): step 1/1. In terms of biological role, catalyzes the reversible conversion of ribose-5-phosphate to ribulose 5-phosphate. The chain is Ribose-5-phosphate isomerase A from Shewanella piezotolerans (strain WP3 / JCM 13877).